The primary structure comprises 403 residues: Tryptophan synthase beta chain 1 (403 aa).

Lys-96 is subject to N6-(pyridoxal phosphate)lysine.

This sequence belongs to the TrpB family. As to quaternary structure, tetramer of two alpha and two beta chains. Requires pyridoxal 5'-phosphate as cofactor.

The catalysed reaction is (1S,2R)-1-C-(indol-3-yl)glycerol 3-phosphate + L-serine = D-glyceraldehyde 3-phosphate + L-tryptophan + H2O. The protein operates within amino-acid biosynthesis; L-tryptophan biosynthesis; L-tryptophan from chorismate: step 5/5. The beta subunit is responsible for the synthesis of L-tryptophan from indole and L-serine. This Wolinella succinogenes (strain ATCC 29543 / DSM 1740 / CCUG 13145 / JCM 31913 / LMG 7466 / NCTC 11488 / FDC 602W) (Vibrio succinogenes) protein is Tryptophan synthase beta chain 1 (trpB1).